Reading from the N-terminus, the 481-residue chain is Anti-sigma-I factor RsgI5 (481 aa).

At 1–50 (MKHKGIVLKLTKSKAIISTNDFQCYYIKRSPTIYVGKEVEFTNKDIVTKK) the chain is on the cytoplasmic side. Residues 3–50 (HKGIVLKLTKSKAIISTNDFQCYYIKRSPTIYVGKEVEFTNKDIVTKK) form the RsgI N-terminal anti-sigma domain. The chain crosses the membrane as a helical span at residues 51-71 (SVLIKPALSVACFILLIACVL). Residues 72-481 (SLSKIINNIS…DATFIGIKVD (410 aa)) are Extracellular-facing. The disordered stretch occupies residues 255-339 (ASEERNPEES…TPTPTPTPAD (85 aa)). Residues 256–265 (SEERNPEESP) show a composition bias toward basic and acidic residues. Composition is skewed to low complexity over residues 266–283 (KMTP…TPTD) and 291–315 (NTPT…TSTP). Pro residues predominate over residues 316–336 (APKPTSTPTPTLMPTPTPTPT).

In terms of assembly, interacts (via RsgI N-terminal anti-sigma domain) with SigI5.

The protein resides in the cell membrane. Anti-sigma factor for SigI5. Negatively regulates SigI5 activity through direct interaction. Binding of the polysaccharide substrate to the extracellular C-terminal sensing domain of RsgI5 may induce a conformational change in its N-terminal cytoplasmic region, leading to the release and activation of SigI5. The protein is Anti-sigma-I factor RsgI5 of Acetivibrio thermocellus (strain ATCC 27405 / DSM 1237 / JCM 9322 / NBRC 103400 / NCIMB 10682 / NRRL B-4536 / VPI 7372) (Clostridium thermocellum).